Here is a 753-residue protein sequence, read N- to C-terminus: 5-methyltetrahydropteroyltriglutamate--homocysteine methyltransferase (753 aa).

Residues 17 to 20 (RELK) and K117 contribute to the 5-methyltetrahydropteroyltri-L-glutamate site. L-homocysteine-binding positions include 431–433 (IGS) and E484. L-methionine contacts are provided by residues 431–433 (IGS) and E484. 5-methyltetrahydropteroyltri-L-glutamate-binding positions include 515–516 (RC) and W561. D599 is a binding site for L-homocysteine. Residue D599 coordinates L-methionine. E605 is a binding site for 5-methyltetrahydropteroyltri-L-glutamate. H641, C643, and E665 together coordinate Zn(2+). H694 acts as the Proton donor in catalysis. C726 is a Zn(2+) binding site.

The protein belongs to the vitamin-B12 independent methionine synthase family. Requires Zn(2+) as cofactor.

The enzyme catalyses 5-methyltetrahydropteroyltri-L-glutamate + L-homocysteine = tetrahydropteroyltri-L-glutamate + L-methionine. Its pathway is amino-acid biosynthesis; L-methionine biosynthesis via de novo pathway; L-methionine from L-homocysteine (MetE route): step 1/1. In terms of biological role, catalyzes the transfer of a methyl group from 5-methyltetrahydrofolate to homocysteine resulting in methionine formation. The protein is 5-methyltetrahydropteroyltriglutamate--homocysteine methyltransferase of Escherichia coli O7:K1 (strain IAI39 / ExPEC).